Here is a 259-residue protein sequence, read N- to C-terminus: Thiazole synthase (259 aa).

Catalysis depends on K100, which acts as the Schiff-base intermediate with DXP. Residues G161, A187–G188, and A209–S210 each bind 1-deoxy-D-xylulose 5-phosphate.

This sequence belongs to the ThiG family. In terms of assembly, homotetramer. Forms heterodimers with either ThiH or ThiS.

It localises to the cytoplasm. The catalysed reaction is [ThiS sulfur-carrier protein]-C-terminal-Gly-aminoethanethioate + 2-iminoacetate + 1-deoxy-D-xylulose 5-phosphate = [ThiS sulfur-carrier protein]-C-terminal Gly-Gly + 2-[(2R,5Z)-2-carboxy-4-methylthiazol-5(2H)-ylidene]ethyl phosphate + 2 H2O + H(+). It functions in the pathway cofactor biosynthesis; thiamine diphosphate biosynthesis. Its function is as follows. Catalyzes the rearrangement of 1-deoxy-D-xylulose 5-phosphate (DXP) to produce the thiazole phosphate moiety of thiamine. Sulfur is provided by the thiocarboxylate moiety of the carrier protein ThiS. In vitro, sulfur can be provided by H(2)S. This chain is Thiazole synthase, found in Salinispora arenicola (strain CNS-205).